Consider the following 356-residue polypeptide: MQPIPDVNQRIARISAHLHPPKYQMEESSVLRRANCRAKGGAPGFKVAILGAAGGIGQPLAMLMKMNPLVSVLHLYDVVNAPGVTADISHMDTGAVVRGFLGQQQLERALTGMDLVVIPAGVPRKPGMTRDDLFKINAGIVKTLCEGIAKCCPTAIVNLISNPVNSTVPIAAEVFKKAGTYDPKRLLGVTMLDVVRANTFVAEVLGLDPRDVNVPVVGGHAGVTILPLLSQVKPPSSFTQEEINYLTDRIQNGGTEVVEAKAGAGSATLSMAYAAVKFADACLRGLRGDAGVVECAFVSSQVTELPFFATKVRLGRNGIDEVYSLGPLNEYERIGLEKAKKELAGSIEKGVSFIRG.

Residues 1–36 (MQPIPDVNQRIARISAHLHPPKYQMEESSVLRRANC) constitute a glyoxysome transit peptide. NAD(+) is bound by residues 51–57 (GAAGGIG) and Asp-77. 2 residues coordinate substrate: Arg-124 and Arg-130. NAD(+)-binding positions include Asn-137 and 160–162 (ISN). Substrate is bound by residues Asn-162 and Arg-196. His-220 functions as the Proton acceptor in the catalytic mechanism. Met-271 contributes to the NAD(+) binding site.

This sequence belongs to the LDH/MDH superfamily. MDH type 1 family. As to quaternary structure, homodimer.

It localises to the glyoxysome. The catalysed reaction is (S)-malate + NAD(+) = oxaloacetate + NADH + H(+). This Cucumis sativus (Cucumber) protein is Malate dehydrogenase, glyoxysomal (MDHG).